A 46-amino-acid polypeptide reads, in one-letter code: Light-harvesting protein B-800/850 beta 2 chain (46 aa).

The Cytoplasmic portion of the chain corresponds to 2–25 (AERSLSGLTEEEAVAVHAQFQTTF). The a bacteriochlorophyll site is built by His18 and His36. A helical transmembrane segment spans residues 26–46 (SAFIVLAAVAHVLVWVWKPWF).

This sequence belongs to the antenna complex beta subunit family. In terms of assembly, the core complex is formed by different alpha and beta chains, binding bacteriochlorophyll molecules, and arranged most probably in tetrameric structures disposed around the reaction center.

The protein localises to the cell inner membrane. Functionally, antenna complexes are light-harvesting systems, which transfer the excitation energy to the reaction centers. This chain is Light-harvesting protein B-800/850 beta 2 chain (B2), found in Magnetospirillum molischianum (Rhodospirillum molischianum).